The following is a 645-amino-acid chain: 1-deoxy-D-xylulose-5-phosphate synthase 2 (645 aa).

Thiamine diphosphate is bound by residues His79 and 120–122 (GHS). Mg(2+) is bound at residue Asp151. Thiamine diphosphate-binding positions include 152 to 153 (GS), Asn180, Tyr291, and Glu373. Position 180 (Asn180) interacts with Mg(2+).

The protein belongs to the transketolase family. DXPS subfamily. Homodimer. Mg(2+) is required as a cofactor. The cofactor is thiamine diphosphate.

It catalyses the reaction D-glyceraldehyde 3-phosphate + pyruvate + H(+) = 1-deoxy-D-xylulose 5-phosphate + CO2. It participates in metabolic intermediate biosynthesis; 1-deoxy-D-xylulose 5-phosphate biosynthesis; 1-deoxy-D-xylulose 5-phosphate from D-glyceraldehyde 3-phosphate and pyruvate: step 1/1. Catalyzes the acyloin condensation reaction between C atoms 2 and 3 of pyruvate and glyceraldehyde 3-phosphate to yield 1-deoxy-D-xylulose-5-phosphate (DXP). In Rhodospirillum rubrum (strain ATCC 11170 / ATH 1.1.1 / DSM 467 / LMG 4362 / NCIMB 8255 / S1), this protein is 1-deoxy-D-xylulose-5-phosphate synthase 2.